The following is a 306-amino-acid chain: Lipoyl synthase (306 aa).

Positions 41, 46, 52, 68, 72, 75, and 281 each coordinate [4Fe-4S] cluster. The 217-residue stretch at 54 to 270 (GARRTATFMI…RKVAMDKGFK (217 aa)) folds into the Radical SAM core domain. Residues 283–306 (HADEQVNEAAKEKHRLGEEKLQQN) form a disordered region.

This sequence belongs to the radical SAM superfamily. Lipoyl synthase family. It depends on [4Fe-4S] cluster as a cofactor.

The protein resides in the cytoplasm. The catalysed reaction is [[Fe-S] cluster scaffold protein carrying a second [4Fe-4S](2+) cluster] + N(6)-octanoyl-L-lysyl-[protein] + 2 oxidized [2Fe-2S]-[ferredoxin] + 2 S-adenosyl-L-methionine + 4 H(+) = [[Fe-S] cluster scaffold protein] + N(6)-[(R)-dihydrolipoyl]-L-lysyl-[protein] + 4 Fe(3+) + 2 hydrogen sulfide + 2 5'-deoxyadenosine + 2 L-methionine + 2 reduced [2Fe-2S]-[ferredoxin]. It participates in protein modification; protein lipoylation via endogenous pathway; protein N(6)-(lipoyl)lysine from octanoyl-[acyl-carrier-protein]. Catalyzes the radical-mediated insertion of two sulfur atoms into the C-6 and C-8 positions of the octanoyl moiety bound to the lipoyl domains of lipoate-dependent enzymes, thereby converting the octanoylated domains into lipoylated derivatives. The polypeptide is Lipoyl synthase (Staphylococcus haemolyticus (strain JCSC1435)).